The primary structure comprises 252 residues: uncharacterized protein (252 aa).

This is an uncharacterized protein from Saccharolobus islandicus (Sulfolobus islandicus).